The chain runs to 977 residues: MPAVSKGDGMRGLAVFISDIRNCKSKEAEIKRINKELANIRSKFKGDKALDGYSKKKYVCKLLFIFLLGHDIDFGHMEAVNLLSSNKYTEKQIGYLFISVLVNSNSELIRLINNAIKNDLASRNPTFMCLALHCIANVGSREMGEAFAADIPRILVAGDSMDSVKQSAALCLLRLYKASPDLVPMGEWTARVVHLLNDQHMGVVTAAVSLITCLCKKNPDDFKTCISLAVSRLSRIVSSASTDLQDYTYYFVPAPWLSVKLLRLLQCYPPPEDAAVKGRLVECLETVLNKAQEPPKSKKVQHSNAKNAILFETISLIIHYDSEPNLLVRACNQLGQFLQHRETNLRYLALESMCTLASSEFSHEAVKTHIDTVINALKTERDVSVRQRAADLLYAMCDRSNAKQIVSEMLRYLETADYAIREEIVLKVAILAEKYAVDYSWYVDTILNLIRIAGDYVSEEVWYRVLQIVTNRDDVQGYAAKTVFEALQAPACHENMVKVGGYILGEFGNLIAGDPRSSPPVQFSLLHSKFHLCSVATRALLLSTYIKFINLFPETKATIQGVLRAGSQLRNADVELQQRAVEYLTLSSVASTDVLATVLEEMPPFPERESSILAKLKRKKGPGAASALDDSRRDTSSNDINGGVEPTPSTVSTPSPSADLLGLRAAPPPAAPPAPVGGNLLVDVFSDGPTAQPSLGPTPEEAFLSELEPPAPESPMALLADPAPAADPGPEDIGPPIPEADELLNKFVCKNSGVLFENQLLQIGVKSEFRQNLGRMYLFYGNKTSVQFQNFLPTVVHPGDLQTQLAVQTKRVAAQVDGGAQVQQVLNIECLRDFLTPPLLSVRFRYGGTAQSLTLKLPVTINKFFQPTEMAAQDFFQRWKQLSLPLQEAQKIFKANHPMDAEVTKAKLLGFGSALLDNVDPNPENFVGAGIIQTKALQVGCLLRLEPNAQAQMYRLTLRTSKEPVSRHLCELLAQQF.

The disordered stretch occupies residues 614-702 (AKLKRKKGPG…PSLGPTPEEA (89 aa)). Ser626 and Ser652 each carry phosphoserine. Low complexity predominate over residues 646–657 (PTPSTVSTPSPS). Thr653 bears the Phosphothreonine mark. Position 655 is a phosphoserine (Ser655). The segment covering 666–675 (APPPAAPPAP) has biased composition (pro residues).

This sequence belongs to the adaptor complexes large subunit family. As to quaternary structure, adaptor protein complex 2 (AP-2) is a heterotetramer composed of two large adaptins (alpha-type subunit AP2A1 or AP2A2 and beta-type subunit AP2B1), a medium adaptin (mu-type subunit AP2M1) and a small adaptin (sigma-type subunit AP2S1). Interacts with HIP1 and RAB11FIP2. Interacts with SLC12A5. Interacts with clathrin. Interacts with SGIP1. Interacts with RFTN1. Interacts with KIAA1107. Interacts with PICALM. Together with AP2B1 and AP2M1, it interacts with ADAM10; this interaction facilitates ADAM10 endocytosis from the plasma membrane during long-term potentiation in hippocampal neurons. Interacts with ABCB11; this interaction regulates cell membrane expression of ABCB11 through its internalization in a clathrin-dependent manner and its subsequent degradation. Probably interacts with ACE2 (via endocytic sorting signal motif); the interaction is inhibited by ACE2 phosphorylation. As to expression, expressed in the brain (at protein level). Isoform A: Expressed only in neuronal tissue and skeletal muscle. Isoform B: Widely expressed.

It is found in the cell membrane. Its subcellular location is the membrane. The protein resides in the coated pit. In terms of biological role, component of the adaptor protein complex 2 (AP-2). Adaptor protein complexes function in protein transport via transport vesicles in different membrane traffic pathways. Adaptor protein complexes are vesicle coat components and appear to be involved in cargo selection and vesicle formation. AP-2 is involved in clathrin-dependent endocytosis in which cargo proteins are incorporated into vesicles surrounded by clathrin (clathrin-coated vesicles, CCVs) which are destined for fusion with the early endosome. The clathrin lattice serves as a mechanical scaffold but is itself unable to bind directly to membrane components. Clathrin-associated adaptor protein (AP) complexes which can bind directly to both the clathrin lattice and to the lipid and protein components of membranes are considered to be the major clathrin adaptors contributing the CCV formation. AP-2 also serves as a cargo receptor to selectively sort the membrane proteins involved in receptor-mediated endocytosis. AP-2 seems to play a role in the recycling of synaptic vesicle membranes from the presynaptic surface. AP-2 recognizes Y-X-X-[FILMV] (Y-X-X-Phi) and [ED]-X-X-X-L-[LI] endocytosis signal motifs within the cytosolic tails of transmembrane cargo molecules. AP-2 may also play a role in maintaining normal post-endocytic trafficking through the ARF6-regulated, non-clathrin pathway. The AP-2 alpha subunit binds polyphosphoinositide-containing lipids, positioning AP-2 on the membrane. During long-term potentiation in hippocampal neurons, AP-2 is responsible for the endocytosis of ADAM10. The AP-2 alpha subunit acts via its C-terminal appendage domain as a scaffolding platform for endocytic accessory proteins. The AP-2 alpha and AP-2 sigma subunits are thought to contribute to the recognition of the [ED]-X-X-X-L-[LI] motif. The sequence is that of AP-2 complex subunit alpha-1 (Ap2a1) from Mus musculus (Mouse).